The sequence spans 612 residues: Dihydroxy-acid dehydratase (612 aa).

Asp-81 contributes to the Mg(2+) binding site. [2Fe-2S] cluster is bound at residue Cys-122. Residues Asp-123 and Lys-124 each contribute to the Mg(2+) site. An N6-carboxylysine modification is found at Lys-124. Cys-195 lines the [2Fe-2S] cluster pocket. Glu-491 provides a ligand contact to Mg(2+). The Proton acceptor role is filled by Ser-517.

It belongs to the IlvD/Edd family. As to quaternary structure, homodimer. [2Fe-2S] cluster is required as a cofactor. The cofactor is Mg(2+).

It catalyses the reaction (2R)-2,3-dihydroxy-3-methylbutanoate = 3-methyl-2-oxobutanoate + H2O. The enzyme catalyses (2R,3R)-2,3-dihydroxy-3-methylpentanoate = (S)-3-methyl-2-oxopentanoate + H2O. The protein operates within amino-acid biosynthesis; L-isoleucine biosynthesis; L-isoleucine from 2-oxobutanoate: step 3/4. It participates in amino-acid biosynthesis; L-valine biosynthesis; L-valine from pyruvate: step 3/4. Its function is as follows. Functions in the biosynthesis of branched-chain amino acids. Catalyzes the dehydration of (2R,3R)-2,3-dihydroxy-3-methylpentanoate (2,3-dihydroxy-3-methylvalerate) into 2-oxo-3-methylpentanoate (2-oxo-3-methylvalerate) and of (2R)-2,3-dihydroxy-3-methylbutanoate (2,3-dihydroxyisovalerate) into 2-oxo-3-methylbutanoate (2-oxoisovalerate), the penultimate precursor to L-isoleucine and L-valine, respectively. The protein is Dihydroxy-acid dehydratase of Rhizobium meliloti (strain 1021) (Ensifer meliloti).